Reading from the N-terminus, the 187-residue chain is Probable DNA endonuclease SmrA (187 aa).

The 82-residue stretch at 88–169 (LNLLRQPVEE…GSGACYVALR (82 aa)) folds into the Smr domain.

Functionally, has DNA endonuclease activity. Binds DNA. The polypeptide is Probable DNA endonuclease SmrA (smrA) (Escherichia coli (strain K12)).